Here is a 78-residue protein sequence, read N- to C-terminus: DNA-directed RNA polymerase subunit omega (78 aa).

This sequence belongs to the RNA polymerase subunit omega family. In cyanobacteria the RNAP catalytic core is composed of 2 alpha, 1 beta, 1 beta', 1 gamma and 1 omega subunit. When a sigma factor is associated with the core the holoenzyme is formed, which can initiate transcription.

It carries out the reaction RNA(n) + a ribonucleoside 5'-triphosphate = RNA(n+1) + diphosphate. In terms of biological role, promotes RNA polymerase assembly. Latches the N- and C-terminal regions of the beta' subunit thereby facilitating its interaction with the beta and alpha subunits. In Prochlorococcus marinus (strain MIT 9515), this protein is DNA-directed RNA polymerase subunit omega.